The following is a 365-amino-acid chain: 4-hydroxy-3-methylbut-2-en-1-yl diphosphate synthase (flavodoxin) (365 aa).

[4Fe-4S] cluster contacts are provided by Cys-265, Cys-268, Cys-300, and Glu-307.

This sequence belongs to the IspG family. It depends on [4Fe-4S] cluster as a cofactor.

The enzyme catalyses (2E)-4-hydroxy-3-methylbut-2-enyl diphosphate + oxidized [flavodoxin] + H2O + 2 H(+) = 2-C-methyl-D-erythritol 2,4-cyclic diphosphate + reduced [flavodoxin]. It participates in isoprenoid biosynthesis; isopentenyl diphosphate biosynthesis via DXP pathway; isopentenyl diphosphate from 1-deoxy-D-xylulose 5-phosphate: step 5/6. Its function is as follows. Converts 2C-methyl-D-erythritol 2,4-cyclodiphosphate (ME-2,4cPP) into 1-hydroxy-2-methyl-2-(E)-butenyl 4-diphosphate. The chain is 4-hydroxy-3-methylbut-2-en-1-yl diphosphate synthase (flavodoxin) from Bacillus mycoides (strain KBAB4) (Bacillus weihenstephanensis).